We begin with the raw amino-acid sequence, 286 residues long: Formyltetrahydrofolate deformylase (286 aa).

Positions 8 to 88 (VLTLQCPEGI…MDWQLRERGQ (81 aa)) constitute an ACT domain. Aspartate 230 is an active-site residue.

This sequence belongs to the PurU family.

The enzyme catalyses (6R)-10-formyltetrahydrofolate + H2O = (6S)-5,6,7,8-tetrahydrofolate + formate + H(+). It participates in purine metabolism; IMP biosynthesis via de novo pathway; formate from 10-formyl-5,6,7,8-tetrahydrofolate: step 1/1. Catalyzes the hydrolysis of 10-formyltetrahydrofolate (formyl-FH4) to formate and tetrahydrofolate (FH4). The chain is Formyltetrahydrofolate deformylase from Corynebacterium sp. (strain P-1).